A 307-amino-acid chain; its full sequence is UPF0276 protein HI_1600 (307 aa).

Belongs to the UPF0276 family.

The sequence is that of UPF0276 protein HI_1600 from Haemophilus influenzae (strain ATCC 51907 / DSM 11121 / KW20 / Rd).